Here is a 291-residue protein sequence, read N- to C-terminus: Protease HtpX (291 aa).

A run of 2 helical transmembrane segments spans residues 4 to 24 and 37 to 57; these read VLLFLATNLAVMLVLSIVLSV and GGLLLMAAVFGFGGSIISLLM. Residue histidine 143 participates in Zn(2+) binding. Residue glutamate 144 is part of the active site. Histidine 147 provides a ligand contact to Zn(2+). The next 2 helical transmembrane spans lie at 158 to 178 and 198 to 218; these read LIQGVVNTFVIYISRVLAGIV and FAISMVFELIFGILASTIVMW. Glutamate 224 is a binding site for Zn(2+).

The protein belongs to the peptidase M48B family. Requires Zn(2+) as cofactor.

It is found in the cell inner membrane. The sequence is that of Protease HtpX from Tolumonas auensis (strain DSM 9187 / NBRC 110442 / TA 4).